Consider the following 229-residue polypeptide: NAD(P)H-hydrate epimerase (229 aa).

The YjeF N-terminal domain maps to 9 to 216 (AISVDEELFN…KLEEKYAMNL (208 aa)). Residue 59–63 (NNGGD) participates in (6S)-NADPHX binding. Residues asparagine 60 and aspartate 124 each contribute to the K(+) site. (6S)-NADPHX-binding positions include 128–134 (GFSFKPP) and aspartate 157. Position 160 (serine 160) interacts with K(+).

Belongs to the NnrE/AIBP family. K(+) serves as cofactor.

It carries out the reaction (6R)-NADHX = (6S)-NADHX. The catalysed reaction is (6R)-NADPHX = (6S)-NADPHX. In terms of biological role, catalyzes the epimerization of the S- and R-forms of NAD(P)HX, a damaged form of NAD(P)H that is a result of enzymatic or heat-dependent hydration. This is a prerequisite for the S-specific NAD(P)H-hydrate dehydratase to allow the repair of both epimers of NAD(P)HX. In Anopheles gambiae (African malaria mosquito), this protein is NAD(P)H-hydrate epimerase.